A 345-amino-acid polypeptide reads, in one-letter code: uncharacterized protein (345 aa).

Disordered regions lie at residues 1 to 24 (MGLE…ENRK) and 296 to 345 (MTAH…LNES). Residues 304–323 (SDYDNDDDTDGIINETDYEL) show a composition bias toward acidic residues. Polar residues predominate over residues 324–345 (DTSQSEFATLTTSSNKSILNES).

This is an uncharacterized protein from Schizosaccharomyces pombe (strain 972 / ATCC 24843) (Fission yeast).